A 288-amino-acid chain; its full sequence is ATP phosphoribosyltransferase (288 aa).

It belongs to the ATP phosphoribosyltransferase family. Long subfamily. Mg(2+) is required as a cofactor.

It is found in the cytoplasm. It carries out the reaction 1-(5-phospho-beta-D-ribosyl)-ATP + diphosphate = 5-phospho-alpha-D-ribose 1-diphosphate + ATP. It functions in the pathway amino-acid biosynthesis; L-histidine biosynthesis; L-histidine from 5-phospho-alpha-D-ribose 1-diphosphate: step 1/9. Feedback inhibited by histidine. In terms of biological role, catalyzes the condensation of ATP and 5-phosphoribose 1-diphosphate to form N'-(5'-phosphoribosyl)-ATP (PR-ATP). Has a crucial role in the pathway because the rate of histidine biosynthesis seems to be controlled primarily by regulation of HisG enzymatic activity. The protein is ATP phosphoribosyltransferase of Methanococcus maripaludis (strain C7 / ATCC BAA-1331).